The sequence spans 156 residues: Small ribosomal subunit protein uS7 (156 aa).

This sequence belongs to the universal ribosomal protein uS7 family. As to quaternary structure, part of the 30S ribosomal subunit. Contacts proteins S9 and S11.

One of the primary rRNA binding proteins, it binds directly to 16S rRNA where it nucleates assembly of the head domain of the 30S subunit. Is located at the subunit interface close to the decoding center, probably blocks exit of the E-site tRNA. The polypeptide is Small ribosomal subunit protein uS7 (Methylococcus capsulatus (strain ATCC 33009 / NCIMB 11132 / Bath)).